The chain runs to 177 residues: ATP synthase subunit delta (177 aa).

This sequence belongs to the ATPase delta chain family. As to quaternary structure, F-type ATPases have 2 components, F(1) - the catalytic core - and F(0) - the membrane proton channel. F(1) has five subunits: alpha(3), beta(3), gamma(1), delta(1), epsilon(1). F(0) has three main subunits: a(1), b(2) and c(10-14). The alpha and beta chains form an alternating ring which encloses part of the gamma chain. F(1) is attached to F(0) by a central stalk formed by the gamma and epsilon chains, while a peripheral stalk is formed by the delta and b chains.

It localises to the cell inner membrane. Its function is as follows. F(1)F(0) ATP synthase produces ATP from ADP in the presence of a proton or sodium gradient. F-type ATPases consist of two structural domains, F(1) containing the extramembraneous catalytic core and F(0) containing the membrane proton channel, linked together by a central stalk and a peripheral stalk. During catalysis, ATP synthesis in the catalytic domain of F(1) is coupled via a rotary mechanism of the central stalk subunits to proton translocation. In terms of biological role, this protein is part of the stalk that links CF(0) to CF(1). It either transmits conformational changes from CF(0) to CF(1) or is implicated in proton conduction. The chain is ATP synthase subunit delta from Shewanella pealeana (strain ATCC 700345 / ANG-SQ1).